The sequence spans 154 residues: Protein X (154 aa).

A mitochondrial targeting sequence region spans residues 68 to 117; sequence PCALRFTSARRMETTVNAHQFLPKVLYKRTLGLSVMSTTDLEAYFKDCLF.

The protein belongs to the orthohepadnavirus protein X family. As to quaternary structure, may form homodimer. May interact with host CEBPA, CFLAR, CREB1, DDB1, E4F1, HBXIP, HSPD1/HSP60, NFKBIA, POLR2E and SMAD4. Interacts with host SMC5-SMC6 complex and induces its degradation. Interacts with host TRPC4AP; leading to prevent ubiquitination of TRPC4AP. Interacts with host PLSCR1; this interaction promotes ubiquitination and degradation of HBx and impairs HBx-mediated cell proliferation. In terms of processing, a fraction may be phosphorylated in insect cells and HepG2 cells, a human hepatoblastoma cell line. Phosphorylated in vitro by host protein kinase C or mitogen-activated protein kinase. N-acetylated in insect cells.

The protein resides in the host cytoplasm. It localises to the host nucleus. It is found in the host mitochondrion. Its function is as follows. Multifunctional protein that plays a role in silencing host antiviral defenses and promoting viral transcription. Does not seem to be essential for HBV infection. May be directly involved in development of cirrhosis and liver cancer (hepatocellular carcinoma). Most of cytosolic activities involve modulation of cytosolic calcium. The effect on apoptosis is controversial depending on the cell types in which the studies have been conducted. May induce apoptosis by localizing in mitochondria and causing loss of mitochondrial membrane potential. May also modulate apoptosis by binding host CFLAR, a key regulator of the death-inducing signaling complex (DISC). Promotes viral transcription by using the host E3 ubiquitin ligase DDB1 to target the SMC5-SMC6 complex to proteasomal degradation. This host complex would otherwise bind to viral episomal DNA, and prevents its transcription. Moderately stimulates transcription of many different viral and cellular transcription elements. Promoters and enhancers stimulated by HBx contain DNA binding sites for NF-kappa-B, AP-1, AP-2, c-EBP, ATF/CREB, or the calcium-activated factor NF-AT. In Homo sapiens (Human), this protein is Protein X.